Here is a 635-residue protein sequence, read N- to C-terminus: Sodium- and chloride-dependent creatine transporter 1 (635 aa).

Polar residues predominate over residues 1–11; it reads MANKSTENGIY. The tract at residues 1-27 is disordered; the sequence is MANKSTENGIYSVSGEEKKGPLIAPGP. Residues 1-60 lie on the Cytoplasmic side of the membrane; that stretch reads MANKSTENGIYSVSGEEKKGPLIAPGPDGAPAKGDGPAALGAPGSLLAVPPRETWTRQMD. A helical transmembrane segment spans residues 61–81; it reads FIMSCVGFAVGLGNVWRFPYL. Topologically, residues 82-87 are extracellular; the sequence is CYKNGG. The chain crosses the membrane as a helical span at residues 88 to 108; that stretch reads GVFLIPYILIALIGGIPIFFL. The Cytoplasmic portion of the chain corresponds to 109–138; it reads EISLGQFMKAGSINVWNICPLFKGLGYASM. Residues 139 to 159 traverse the membrane as a helical segment; the sequence is VIVFYCNTYYIMVLAWGFYYL. The Extracellular portion of the chain corresponds to 160 to 230; that stretch reads VKSFTTTLPW…LSEGLEVPGA (71 aa). Residues Asn-192 and Asn-197 are each glycosylated (N-linked (GlcNAc...) asparagine). A helical transmembrane segment spans residues 231–251; it reads LNWEVTLCLLTCWVLVYFCVW. Over 252–269 the chain is Cytoplasmic; that stretch reads KGVKSTGKIVYFTATFPY. A helical transmembrane segment spans residues 270 to 290; the sequence is VVLVVLLVRGVLLPGALDGII. Over 291 to 304 the chain is Extracellular; sequence YYLKPDWSKLASPQ. A helical membrane pass occupies residues 305–325; sequence VWIDAGTQIFFSYAIGLGALT. At 326 to 341 the chain is on the cytoplasmic side; sequence ALGSYNRFNNNCYKDA. Residues 342–362 form a helical membrane-spanning segment; the sequence is IILALINSGTSFFAGFVVFSI. Residues 363–394 lie on the Extracellular side of the membrane; it reads LGFMATEQGVHISKVAESGPGLAFIAYPRAVT. Residues 395 to 415 traverse the membrane as a helical segment; sequence LMPVAPLWAALFFFMLLLLGL. Residues 416–444 lie on the Cytoplasmic side of the membrane; that stretch reads DSQFVGVEGFITGLLDLLPASYYFRFQRE. The helical transmembrane segment at 445–465 threads the bilayer; the sequence is ISVALCCTICFVIDLSMVTDG. At 466-479 the chain is on the extracellular side; it reads GMYVFQLFDYYSAS. Residues 480 to 500 traverse the membrane as a helical segment; the sequence is GTTLLWQAFWECVVVAWVYGA. The Cytoplasmic segment spans residues 501–520; the sequence is DRFMDDVACMIGYRPCPWMK. Residues 521 to 541 traverse the membrane as a helical segment; the sequence is WCWSFFTPLVCMGIFIFNVVY. At 542–560 the chain is on the extracellular side; sequence HEPLVYNNTYVYPWWGEAV. Asn-548 carries N-linked (GlcNAc...) asparagine glycosylation. The chain crosses the membrane as a helical span at residues 561-581; sequence GWAFALSSMLCVPLHLLGCLL. Residues 582–635 are Cytoplasmic-facing; the sequence is RAKGTMAERWQHLTQPIWGLHHLEYRAQDSDVRGLTTLTPVSESSKVVVVESVM. 2 positions are modified to phosphothreonine: Thr-617 and Thr-620. Ser-623 bears the Phosphoserine mark.

This sequence belongs to the sodium:neurotransmitter symporter (SNF) (TC 2.A.22) family. SLC6A8 subfamily. In terms of processing, glycosylated.

The protein resides in the cell membrane. Its subcellular location is the apical cell membrane. The catalysed reaction is creatine(out) + chloride(out) + 2 Na(+)(out) = creatine(in) + chloride(in) + 2 Na(+)(in). Its function is as follows. Creatine:sodium symporter which mediates the uptake of creatine. Plays an important role in supplying creatine to the brain via the blood-brain barrier. The protein is Sodium- and chloride-dependent creatine transporter 1 (SLC6A8) of Bos taurus (Bovine).